The following is a 186-amino-acid chain: Fanconi anemia core complex-associated protein 20 (186 aa).

Disordered stretches follow at residues 1-30 (MEEERRLRGRLSRRRPPAGGGPPNCRPWFL) and 50-90 (TADW…GSKT). A compositionally biased stretch (basic residues) spans 7–16 (LRGRLSRRRP). The residue at position 119 (Ser119) is a Phosphoserine. A UBZ2-type zinc finger spans residues 150–186 (LLSCPLCQKAFDPKLTQLDVDSHLAQCLAECTEDVVW). Residues Cys153, Cys156, His172, and Cys176 each coordinate Zn(2+).

As to quaternary structure, component of the Fanconi anemia (FA) complex. Interacts with FANCA; interaction is direct. Interacts with REV1.

It is found in the nucleus. It localises to the chromosome. Functionally, component of the Fanconi anemia (FA) complex required to recruit the FA complex to DNA interstrand cross-links (ICLs) and promote ICLs repair. Following DNA damage recognizes and binds 'Lys-63'-linked ubiquitin generated by RNF8 at ICLs and recruits other components of the FA complex. Promotes translesion synthesis via interaction with REV1. This is Fanconi anemia core complex-associated protein 20 from Mus musculus (Mouse).